A 316-amino-acid chain; its full sequence is METWQELKVTVKREGEELVSNLLIELGAQGVAIEDSMDYMGNVDRFGEIFPEVEQQEEIVVTAYYPDTVDVTVVEADLQARLAELTDFMDLGEVKMGTTALAEEDWADNWKKYYEPARITHDLTIVPSWTDYEATAGEKIIKLDPGMAFGTGTHPTTKMSLFALEQVLRGGETVLDVGTGSGVLSIASSLLGAKEIFAYDLDDVAVRVAQENIELNPGMENIHVAAGDLLKGVEIEADVIVANILADILIHLTDDAYRLVKDEGYLIMSGIIKDKWDMVRESAESAGFFLETHMVQGEWNACVFKKTKDISGVIGG.

Threonine 157, glycine 178, aspartate 200, and asparagine 243 together coordinate S-adenosyl-L-methionine.

The protein belongs to the methyltransferase superfamily. PrmA family.

It is found in the cytoplasm. It carries out the reaction L-lysyl-[protein] + 3 S-adenosyl-L-methionine = N(6),N(6),N(6)-trimethyl-L-lysyl-[protein] + 3 S-adenosyl-L-homocysteine + 3 H(+). Methylates ribosomal protein L11. This chain is Ribosomal protein L11 methyltransferase, found in Streptococcus pneumoniae serotype 2 (strain D39 / NCTC 7466).